A 328-amino-acid chain; its full sequence is Carbonic anhydrase-related protein 11 (328 aa).

The first 23 residues, 1–23 (MGAAARLSAPRALVLWAALGAAA), serve as a signal peptide directing secretion. One can recognise an Alpha-carbonic anhydrase domain in the interval 33–303 (DWWSYKDNLQ…LAHRALRGNR (271 aa)). Residues N118, N170, and N260 are each glycosylated (N-linked (GlcNAc...) asparagine). A disordered region spans residues 299 to 328 (LRGNRDPRHPERRCRGPNYRLHVDGAPHGR). Positions 319-328 (LHVDGAPHGR) are enriched in basic and acidic residues.

It belongs to the alpha-carbonic anhydrase family.

The protein resides in the secreted. Its function is as follows. Does not have a catalytic activity. The chain is Carbonic anhydrase-related protein 11 (CA11) from Pongo abelii (Sumatran orangutan).